The following is a 424-amino-acid chain: Serine hydroxymethyltransferase 1 (424 aa).

(6S)-5,6,7,8-tetrahydrofolate contacts are provided by residues Leu-125 and 129–131 (GHL). Position 234 is an N6-(pyridoxal phosphate)lysine (Lys-234).

Belongs to the SHMT family. Homodimer. Pyridoxal 5'-phosphate serves as cofactor.

It localises to the cytoplasm. The enzyme catalyses (6R)-5,10-methylene-5,6,7,8-tetrahydrofolate + glycine + H2O = (6S)-5,6,7,8-tetrahydrofolate + L-serine. It participates in one-carbon metabolism; tetrahydrofolate interconversion. It functions in the pathway amino-acid biosynthesis; glycine biosynthesis; glycine from L-serine: step 1/1. In terms of biological role, catalyzes the reversible interconversion of serine and glycine with tetrahydrofolate (THF) serving as the one-carbon carrier. This reaction serves as the major source of one-carbon groups required for the biosynthesis of purines, thymidylate, methionine, and other important biomolecules. Also exhibits THF-independent aldolase activity toward beta-hydroxyamino acids, producing glycine and aldehydes, via a retro-aldol mechanism. The chain is Serine hydroxymethyltransferase 1 from Burkholderia lata (strain ATCC 17760 / DSM 23089 / LMG 22485 / NCIMB 9086 / R18194 / 383).